A 59-amino-acid polypeptide reads, in one-letter code: Small ribosomal subunit protein bS21 (59 aa).

The tract at residues 34-59 is disordered; the sequence is KHEHYEKPSVKRKKKSEAARRRKRSF. Basic residues predominate over residues 43-59; that stretch reads VKRKKKSEAARRRKRSF.

This sequence belongs to the bacterial ribosomal protein bS21 family.

This is Small ribosomal subunit protein bS21 from Desulforudis audaxviator (strain MP104C).